A 150-amino-acid chain; its full sequence is SsrA-binding protein (150 aa).

Belongs to the SmpB family.

Its subcellular location is the cytoplasm. Its function is as follows. Required for rescue of stalled ribosomes mediated by trans-translation. Binds to transfer-messenger RNA (tmRNA), required for stable association of tmRNA with ribosomes. tmRNA and SmpB together mimic tRNA shape, replacing the anticodon stem-loop with SmpB. tmRNA is encoded by the ssrA gene; the 2 termini fold to resemble tRNA(Ala) and it encodes a 'tag peptide', a short internal open reading frame. During trans-translation Ala-aminoacylated tmRNA acts like a tRNA, entering the A-site of stalled ribosomes, displacing the stalled mRNA. The ribosome then switches to translate the ORF on the tmRNA; the nascent peptide is terminated with the 'tag peptide' encoded by the tmRNA and targeted for degradation. The ribosome is freed to recommence translation, which seems to be the essential function of trans-translation. In Campylobacter jejuni (strain RM1221), this protein is SsrA-binding protein.